The primary structure comprises 770 residues: Tripartite terminase subunit 1 (770 aa).

The C3H1-type zinc finger occupies 199–227 (CAICFEELCITANQGETLHRRLLGCICDH). 675-682 (FTSVFHCG) provides a ligand contact to ATP.

It belongs to the herpesviridae TRM1 protein family. In terms of assembly, associates with TRM2 and TRM3 to form the tripartite terminase complex. Interacts with portal protein.

The protein localises to the host nucleus. In terms of biological role, component of the molecular motor that translocates viral genomic DNA in empty capsid during DNA packaging. Forms a tripartite terminase complex together with TRM2 and TRM3 in the host cytoplasm. Once the complex reaches the host nucleus, it interacts with the capsid portal vertex. This portal forms a ring in which genomic DNA is translocated into the capsid. TRM1 carries an endonuclease activity that plays an important role for the cleavage of concatemeric viral DNA into unit length genomes. The chain is Tripartite terminase subunit 1 from Varicella-zoster virus (strain Dumas) (HHV-3).